We begin with the raw amino-acid sequence, 315 residues long: Acetyl-coenzyme A carboxylase carboxyl transferase subunit alpha (315 aa).

The 254-residue stretch at 36–289 (LSKKRLELME…RKAVAAELKI (254 aa)) folds into the CoA carboxyltransferase C-terminal domain.

This sequence belongs to the AccA family. As to quaternary structure, acetyl-CoA carboxylase is a heterohexamer composed of biotin carboxyl carrier protein (AccB), biotin carboxylase (AccC) and two subunits each of ACCase subunit alpha (AccA) and ACCase subunit beta (AccD).

It localises to the cytoplasm. The enzyme catalyses N(6)-carboxybiotinyl-L-lysyl-[protein] + acetyl-CoA = N(6)-biotinyl-L-lysyl-[protein] + malonyl-CoA. It functions in the pathway lipid metabolism; malonyl-CoA biosynthesis; malonyl-CoA from acetyl-CoA: step 1/1. Component of the acetyl coenzyme A carboxylase (ACC) complex. First, biotin carboxylase catalyzes the carboxylation of biotin on its carrier protein (BCCP) and then the CO(2) group is transferred by the carboxyltransferase to acetyl-CoA to form malonyl-CoA. The polypeptide is Acetyl-coenzyme A carboxylase carboxyl transferase subunit alpha (Francisella tularensis subsp. tularensis (strain FSC 198)).